A 681-amino-acid polypeptide reads, in one-letter code: DNA ligase (681 aa).

NAD(+) is bound by residues 45 to 49, 94 to 95, and E120; these read DFDFD and SL. Residue K122 is the N6-AMP-lysine intermediate of the active site. Residues R143, E177, K289, and K313 each coordinate NAD(+). 4 residues coordinate Zn(2+): C403, C406, C421, and C426. One can recognise a BRCT domain in the interval 593–681; that stretch reads SDQQPFAGQS…SLKINFKNTI (89 aa).

This sequence belongs to the NAD-dependent DNA ligase family. LigA subfamily. Mg(2+) serves as cofactor. It depends on Mn(2+) as a cofactor.

The catalysed reaction is NAD(+) + (deoxyribonucleotide)n-3'-hydroxyl + 5'-phospho-(deoxyribonucleotide)m = (deoxyribonucleotide)n+m + AMP + beta-nicotinamide D-nucleotide.. In terms of biological role, DNA ligase that catalyzes the formation of phosphodiester linkages between 5'-phosphoryl and 3'-hydroxyl groups in double-stranded DNA using NAD as a coenzyme and as the energy source for the reaction. It is essential for DNA replication and repair of damaged DNA. This Leptospira borgpetersenii serovar Hardjo-bovis (strain JB197) protein is DNA ligase.